Consider the following 59-residue polypeptide: Small ribosomal subunit protein bS21 (59 aa).

It belongs to the bacterial ribosomal protein bS21 family.

The chain is Small ribosomal subunit protein bS21 from Acaryochloris marina (strain MBIC 11017).